We begin with the raw amino-acid sequence, 535 residues long: CTP synthase (535 aa).

Residues 1–267 are amidoligase domain; that stretch reads MTKFIFVTGG…DDIVIKKLGL (267 aa). Ser-13 contacts CTP. UTP is bound at residue Ser-13. 14–19 is a binding site for ATP; it reads SLGKGI. Residue Tyr-54 coordinates L-glutamine. Asp-71 contacts ATP. 2 residues coordinate Mg(2+): Asp-71 and Glu-141. CTP-binding positions include 148–150, 188–193, and Lys-224; these read DIE and KTKPTQ. UTP-binding positions include 188–193 and Lys-224; that span reads KTKPTQ. The 243-residue stretch at 292–534 folds into the Glutamine amidotransferase type-1 domain; the sequence is TIGIVGKYVS…IGASLKTNKL (243 aa). Gly-354 is an L-glutamine binding site. The Nucleophile; for glutamine hydrolysis role is filled by Cys-381. L-glutamine contacts are provided by residues 382 to 385, Glu-405, and Arg-462; that span reads LGMQ. Active-site residues include His-507 and Glu-509.

Belongs to the CTP synthase family. Homotetramer.

It catalyses the reaction UTP + L-glutamine + ATP + H2O = CTP + L-glutamate + ADP + phosphate + 2 H(+). It carries out the reaction L-glutamine + H2O = L-glutamate + NH4(+). The enzyme catalyses UTP + NH4(+) + ATP = CTP + ADP + phosphate + 2 H(+). The protein operates within pyrimidine metabolism; CTP biosynthesis via de novo pathway; CTP from UDP: step 2/2. With respect to regulation, allosterically activated by GTP, when glutamine is the substrate; GTP has no effect on the reaction when ammonia is the substrate. The allosteric effector GTP functions by stabilizing the protein conformation that binds the tetrahedral intermediate(s) formed during glutamine hydrolysis. Inhibited by the product CTP, via allosteric rather than competitive inhibition. Its function is as follows. Catalyzes the ATP-dependent amination of UTP to CTP with either L-glutamine or ammonia as the source of nitrogen. Regulates intracellular CTP levels through interactions with the four ribonucleotide triphosphates. The polypeptide is CTP synthase (Carboxydothermus hydrogenoformans (strain ATCC BAA-161 / DSM 6008 / Z-2901)).